Here is a 197-residue protein sequence, read N- to C-terminus: MNLIPTVIEQSSRGERAYDIYSRLLKDRIIMLSGPIDDNVANSVIAQLLFLDAQDSEKDIYLYINSPGGSVSAGLAIFDTMNFVKADVQTIVLGMAASMGSFLLTAGQKGKRFALPNAEIMIHQPLGGAQGQATEIEIAARHILDTRQRLNSILAERTGQPIEVIERDTDRDNYMTAEQAKEYGLIDEVMENSSALN.

The Nucleophile role is filled by Ser98. The active site involves His123.

Belongs to the peptidase S14 family. As to quaternary structure, fourteen ClpP subunits assemble into 2 heptameric rings which stack back to back to give a disk-like structure with a central cavity, resembling the structure of eukaryotic proteasomes.

It localises to the cytoplasm. The catalysed reaction is Hydrolysis of proteins to small peptides in the presence of ATP and magnesium. alpha-casein is the usual test substrate. In the absence of ATP, only oligopeptides shorter than five residues are hydrolyzed (such as succinyl-Leu-Tyr-|-NHMec, and Leu-Tyr-Leu-|-Tyr-Trp, in which cleavage of the -Tyr-|-Leu- and -Tyr-|-Trp bonds also occurs).. In terms of biological role, cleaves peptides in various proteins in a process that requires ATP hydrolysis. Has a chymotrypsin-like activity. Plays a major role in the degradation of misfolded proteins. In Enterococcus faecalis (strain ATCC 700802 / V583), this protein is ATP-dependent Clp protease proteolytic subunit.